A 324-amino-acid polypeptide reads, in one-letter code: N-acetyl-gamma-glutamyl-phosphate reductase (324 aa).

The active site involves cysteine 131.

It belongs to the NAGSA dehydrogenase family. Type 1 subfamily.

The protein localises to the cytoplasm. The catalysed reaction is N-acetyl-L-glutamate 5-semialdehyde + phosphate + NADP(+) = N-acetyl-L-glutamyl 5-phosphate + NADPH + H(+). The protein operates within amino-acid biosynthesis; L-arginine biosynthesis; N(2)-acetyl-L-ornithine from L-glutamate: step 3/4. Its function is as follows. Catalyzes the NADPH-dependent reduction of N-acetyl-5-glutamyl phosphate to yield N-acetyl-L-glutamate 5-semialdehyde. The chain is N-acetyl-gamma-glutamyl-phosphate reductase from Bradyrhizobium sp. (strain BTAi1 / ATCC BAA-1182).